The chain runs to 93 residues: UPF0728 protein C10orf53 (93 aa).

The protein belongs to the UPF0728 family.

The polypeptide is UPF0728 protein C10orf53 (C10orf53) (Homo sapiens (Human)).